We begin with the raw amino-acid sequence, 129 residues long: uncharacterized protein (129 aa).

The first 24 residues, 1 to 24 (MAFGWHSMHGSIIWFLQIAQLSTA), serve as a signal peptide directing secretion. The next 2 membrane-spanning stretches (helical) occupy residues 38-58 (ISNL…CAIF) and 95-115 (IAHI…FTPL).

The protein localises to the membrane. This is an uncharacterized protein from Saccharomyces cerevisiae (strain ATCC 204508 / S288c) (Baker's yeast).